A 382-amino-acid polypeptide reads, in one-letter code: Beta-1,4-galactosyltransferase 6 (382 aa).

Residues 1–15 lie on the Cytoplasmic side of the membrane; that stretch reads MSALKRMMRVSNRSL. Residues 16–35 form a helical; Signal-anchor for type II membrane protein membrane-spanning segment; it reads IAFIFFFSLSTSCLYFIYVA. Over 36–382 the chain is Lumenal; sequence PGIANTYLFM…MPELAPVEDY (347 aa). N-linked (GlcNAc...) asparagine glycans are attached at residues Asn71, Asn75, Asn83, Asn84, Asn99, and Asn122. Cys108 and Cys152 are joined by a disulfide. Residues 163-167, 202-204, 229-230, Tyr258, and Trp290 each bind UDP-alpha-D-galactose; these read PFRNR, FNR, and VD. Cys223 and Cys242 are joined by a disulfide. Asp230 is a binding site for Mn(2+). 292–295 contacts N-acetyl-D-glucosamine; sequence GEDD. N-linked (GlcNAc...) asparagine glycosylation occurs at Asn307. His323 contacts Mn(2+). Position 323–324 (323–324) interacts with UDP-alpha-D-galactose; that stretch reads HH. Arg334 contacts N-acetyl-D-glucosamine. A glycan (N-linked (GlcNAc...) asparagine) is linked at Asn367.

This sequence belongs to the glycosyltransferase 7 family. The cofactor is Mn(2+). It depends on Mg(2+) as a cofactor. Ca(2+) is required as a cofactor. In terms of tissue distribution, highest expression in brain with lower levels found in lungs, heart, skeletal muscle and kidney. Lowest expression in testis, liver and spleen.

The protein resides in the golgi apparatus. Its subcellular location is the golgi stack membrane. It carries out the reaction a beta-D-glucosyl-(1&lt;-&gt;1')-N-acylsphing-4-enine + UDP-alpha-D-galactose = a beta-D-Gal-(1-&gt;4)-beta-D-Glc-(1&lt;-&gt;1)-Cer(d18:1(4E)) + UDP + H(+). It functions in the pathway protein modification; protein glycosylation. It participates in sphingolipid metabolism. Its activity is regulated as follows. Inhibited by EDTA. Catalyzes the synthesis of lactosylceramide (LacCer) via the transfer of galactose from UDP-galactose to glucosylceramide (GlcCer). LacCer is the starting point in the biosynthesis of all gangliosides (membrane-bound glycosphingolipids) which play pivotal roles in the CNS including neuronal maturation and axonal and myelin formation. This chain is Beta-1,4-galactosyltransferase 6, found in Rattus norvegicus (Rat).